Reading from the N-terminus, the 691-residue chain is Dynamin-1-like protein (691 aa).

A Dynamin-type G domain is found at 22 to 301; sequence IIQLPQIAVV…LMHHIRDCLP (280 aa). Residues 32–39 are G1 motif; the sequence is GTQSSGKS. Position 32-40 (32-40) interacts with GTP; sequence GTQSSGKSS. The tract at residues 58 to 60 is G2 motif; the sequence is VTR. Positions 145-148 are G3 motif; the sequence is DLPG. The G4 motif stretch occupies residues 214–217; the sequence is TKLD. GTP is bound by residues 214 to 220 and 245 to 248; these read TKLDLMD and NRSQ. Residues 244 to 247 form a G5 motif region; sequence VNRS. Positions 343–488 are middle domain; sequence YCNTIEGTAK…NEMVHNLVAI (146 aa). Basic and acidic residues-rich tracts occupy residues 522–531 and 551–563; these read LPTSVPRDKM and KKGD…EKTK. Positions 522–573 are disordered; sequence LPTSVPRDKMAGGAQAEQEGGTGTWRGMLKKGDEGQGEEKTKLQSSIPASPQ. In terms of domain architecture, GED spans 599–690; it reads CEVIERLIKS…VIAEIRETHL (92 aa). The tract at residues 609–623 is important for homodimerization; that stretch reads YFLIVRKNIQDSVPK.

Belongs to the TRAFAC class dynamin-like GTPase superfamily. Dynamin/Fzo/YdjA family. Homotetramer; dimerizes through the N-terminal GTP-middle region of one molecule binding to the GED domain of another DNM1L molecule. Oligomerizes in a GTP-dependent manner to form membrane-associated tubules with a spiral pattern.

Its subcellular location is the cytoplasm. It is found in the cytosol. The protein resides in the golgi apparatus. The protein localises to the endomembrane system. It localises to the mitochondrion outer membrane. Its subcellular location is the peroxisome. It is found in the membrane. The protein resides in the clathrin-coated pit. The protein localises to the cytoplasmic vesicle. It localises to the secretory vesicle. Its subcellular location is the synaptic vesicle membrane. The enzyme catalyses GTP + H2O = GDP + phosphate + H(+). In terms of biological role, functions in mitochondrial and peroxisomal division. Mediates membrane fission through oligomerization into membrane-associated tubular structures that wrap around the scission site to constrict and sever the mitochondrial membrane through a GTP hydrolysis-dependent mechanism. The specific recruitment at scission sites is mediated by membrane receptors like MFF, MIEF1 and MIEF2 for mitochondrial membranes. While the recruitment by the membrane receptors is GTP-dependent, the following hydrolysis of GTP induces the dissociation from the receptors and allows DNM1L filaments to curl into closed rings that are probably sufficient to sever a double membrane. May play a role in the circadian control of mitochondrial ATP production. This chain is Dynamin-1-like protein, found in Danio rerio (Zebrafish).